We begin with the raw amino-acid sequence, 209 residues long: Ribosomal RNA large subunit methyltransferase E (209 aa).

Positions 63, 65, 83, 99, and 124 each coordinate S-adenosyl-L-methionine. Residue K164 is the Proton acceptor of the active site.

Belongs to the class I-like SAM-binding methyltransferase superfamily. RNA methyltransferase RlmE family.

The protein localises to the cytoplasm. It catalyses the reaction uridine(2552) in 23S rRNA + S-adenosyl-L-methionine = 2'-O-methyluridine(2552) in 23S rRNA + S-adenosyl-L-homocysteine + H(+). Its function is as follows. Specifically methylates the uridine in position 2552 of 23S rRNA at the 2'-O position of the ribose in the fully assembled 50S ribosomal subunit. The polypeptide is Ribosomal RNA large subunit methyltransferase E (Shewanella amazonensis (strain ATCC BAA-1098 / SB2B)).